Here is a 142-residue protein sequence, read N- to C-terminus: Transcriptional regulator MraZ (142 aa).

SpoVT-AbrB domains lie at 5-48 and 77-120; these read EFEY…PLCE and AFDV…DKET.

This sequence belongs to the MraZ family. As to quaternary structure, forms oligomers.

It is found in the cytoplasm. The protein localises to the nucleoid. The protein is Transcriptional regulator MraZ of Dehalococcoides mccartyi (strain ATCC BAA-2266 / KCTC 15142 / 195) (Dehalococcoides ethenogenes (strain 195)).